Here is a 333-residue protein sequence, read N- to C-terminus: Viral cathepsin (333 aa).

Positions 1–20 are cleaved as a signal peptide; the sequence is MTKLLNFVILASVLTVTAHA. The propeptide at 21–124 is activation peptide; sequence LTYDLNNSDE…VIKDEPQALL (104 aa). 3 disulfide bridges follow: C145-C186, C179-C219, and C272-C321. The active site involves C148. A glycan (N-linked (GlcNAc...) asparagine; by host) is linked at N170. Residues H280 and N300 contribute to the active site.

This sequence belongs to the peptidase C1 family. Post-translationally, synthesized as an inactive proenzyme and activated by proteolytic removal of the inhibitory propeptide.

The catalysed reaction is Endopeptidase of broad specificity, hydrolyzing substrates of both cathepsin L and cathepsin B.. Cysteine protease that plays an essential role in host liquefaction to facilitate horizontal transmission of the virus. May participate in the degradation of foreign protein expressed by the baculovirus system. The protein is Viral cathepsin (VCATH) of Cydia pomonella granulosis virus (isolate Mexico/1963) (CpGV).